A 347-amino-acid chain; its full sequence is uncharacterized protein (347 aa).

This is an uncharacterized protein from Invertebrate iridescent virus 3 (IIV-3).